The following is a 173-amino-acid chain: Histone deacetylase complex subunit SAP30 homolog (173 aa).

An Atypical zinc finger spans residues 21–69; the sequence is CCLLDDGDRCRNQAGNASYSKRIQKTVTQRRLKLSIDTAARHIYICDFH.

It belongs to the SAP30 family. As to quaternary structure, component of the class 1 Sin3-histone deacetylase complex (HDAC).

The protein localises to the nucleus. In terms of biological role, required for the function of the class 1 Sin3-histone deacetylase complex (HDAC). The chain is Histone deacetylase complex subunit SAP30 homolog from Aedes aegypti (Yellowfever mosquito).